The following is a 161-amino-acid chain: MKGSCETTMVKSLLLLMLGFAIISSGAARRNPKVGLSALQKAGNCPPLEDNSVRVDIRIFNQNQGISVPRDFQNRSSSPWDYNITRDPDRFPSEIAEAQCRHSGCINAQGQEDGSMNSVPIQQEILVLRREPQGCSNSFRLEKMLIKVGCTCVTPIVHHAA.

The first 28 residues, 1-28, serve as a signal peptide directing secretion; it reads MKGSCETTMVKSLLLLMLGFAIISSGAA. N-linked (GlcNAc...) asparagine glycosylation occurs at Asn-83. 2 cysteine pairs are disulfide-bonded: Cys-100/Cys-150 and Cys-105/Cys-152.

Belongs to the IL-17 family. In terms of assembly, homodimer; disulfide-linked. Heterodimer with IL17A (IL17A-IL17F). Forms complexes with IL17RA and IL17RC receptors with 2:1 binding stoichiometry: two receptor chains for one interleukin molecule. IL17F homodimer forms predominantly complexes with IL17RC homodimer, whereas IL17A-IL17F favors complexes with IL17RA-IL17RC. IL17RA and IL17RC chains cannot distinguish between IL17A and IL17F molecules, potentially enabling the formation of topologically distinct complexes.

It is found in the secreted. Its function is as follows. Effector cytokine of innate and adaptive immune system involved in antimicrobial host defense and maintenance of tissue integrity. IL17A-IL17F signals via IL17RA-IL17RC heterodimeric receptor complex, triggering homotypic interaction of IL17RA and IL17RC chains with TRAF3IP2 adapter through SEFIR domains. This leads to downstream TRAF6-mediated activation of NF-kappa-B and MAPkinase pathways ultimately resulting in transcriptional activation of cytokines, chemokines, antimicrobial peptides and matrix metalloproteinases, with potential strong immune inflammation. IL17A-IL17F is primarily involved in host defense against extracellular bacteria and fungi by inducing neutrophilic inflammation. As signature effector cytokine of T-helper 17 cells (Th17), primarily induces neutrophil activation and recruitment at infection and inflammatory sites. Stimulates the production of antimicrobial beta-defensins DEFB1, DEFB103A, and DEFB104A by mucosal epithelial cells, limiting the entry of microbes through the epithelial barriers. IL17F homodimer can signal via IL17RC homodimeric receptor complex, triggering downstream activation of TRAF6 and NF-kappa-B signaling pathway. Via IL17RC induces transcriptional activation of IL33, a potent cytokine that stimulates group 2 innate lymphoid cells and adaptive T-helper 2 cells involved in pulmonary allergic response to fungi. Likely via IL17RC, promotes sympathetic innervation of peripheral organs by coordinating the communication between gamma-delta T cells and parenchymal cells. Stimulates sympathetic innervation of thermogenic adipose tissue by driving TGFB1 expression. Regulates the composition of intestinal microbiota and immune tolerance by inducing antimicrobial proteins that specifically control the growth of commensal Firmicutes and Bacteroidetes. The polypeptide is Interleukin-17F (Il17f) (Rattus norvegicus (Rat)).